Consider the following 433-residue polypeptide: Ribosome biogenesis protein WDR12 homolog (433 aa).

A ubiquitin-like (UBL) domain region spans residues 21 to 102 (VEVFVVSYRH…ESVISIECIV (82 aa)). WD repeat units lie at residues 114 to 151 (ALLDWIGAIRCNDKFIASATYGGELVLWNHYGKKLTSS), 153 to 194 (LHEE…SSTF), 203 to 242 (GHERSVEAIAVNTDGTRTVSGGFDKMLKVWNTDKDDTSTV), 270 to 310 (GHKD…QINT), 312 to 351 (AAKKAFTSISVCCSSGMLITGSVDPVVRLWDPRSHEGTLV), 357 to 397 (GHCG…TPLY), and 401 to 433 (GHSDRILCCDWSVNELIVSGGVDCTMKTYRRKM).

It belongs to the WD repeat WDR12/YTM1 family.

The protein resides in the nucleus. It is found in the nucleolus. The protein localises to the nucleoplasm. Required for maturation of ribosomal RNAs and formation of the large ribosomal subunit. In Brugia malayi (Filarial nematode worm), this protein is Ribosome biogenesis protein WDR12 homolog.